The primary structure comprises 63 residues: Large ribosomal subunit protein uL29 (63 aa).

This sequence belongs to the universal ribosomal protein uL29 family.

This is Large ribosomal subunit protein uL29 from Alteromonas mediterranea (strain DSM 17117 / CIP 110805 / LMG 28347 / Deep ecotype).